Here is a 473-residue protein sequence, read N- to C-terminus: Photosystem II CP43 reaction center protein (473 aa).

Residues 1 to 14 (MKILYSPRRFYPVE) constitute a propeptide that is removed on maturation. Position 15 is an N-acetylthreonine (threonine 15). Threonine 15 is subject to Phosphothreonine. 5 consecutive transmembrane segments (helical) span residues 69–93 (LFEVAHFVSEKPMYEQGLILLPHLA), 134–155 (LIGPETLEESFPFFGYTWKDKN), 178–200 (KALYFGGLYDTWAPGGGDVREIT), 255–275 (KPFAWARRAFVWSGEAYLSYS), and 291–312 (WFNNTAYPSEFYGPTGPEASQA). Glutamate 367 contacts [CaMn4O5] cluster. The chain crosses the membrane as a helical span at residues 447–471 (RARAAAAGFEKGIDRDTEPVLSMTP).

Belongs to the PsbB/PsbC family. PsbC subfamily. PSII is composed of 1 copy each of membrane proteins PsbA, PsbB, PsbC, PsbD, PsbE, PsbF, PsbH, PsbI, PsbJ, PsbK, PsbL, PsbM, PsbT, PsbX, PsbY, PsbZ, Psb30/Ycf12, at least 3 peripheral proteins of the oxygen-evolving complex and a large number of cofactors. It forms dimeric complexes. It depends on Binds multiple chlorophylls and provides some of the ligands for the Ca-4Mn-5O cluster of the oxygen-evolving complex. It may also provide a ligand for a Cl- that is required for oxygen evolution. PSII binds additional chlorophylls, carotenoids and specific lipids. as a cofactor.

It is found in the plastid. The protein localises to the chloroplast thylakoid membrane. Functionally, one of the components of the core complex of photosystem II (PSII). It binds chlorophyll and helps catalyze the primary light-induced photochemical processes of PSII. PSII is a light-driven water:plastoquinone oxidoreductase, using light energy to abstract electrons from H(2)O, generating O(2) and a proton gradient subsequently used for ATP formation. The chain is Photosystem II CP43 reaction center protein from Adiantum capillus-veneris (Maidenhair fern).